Reading from the N-terminus, the 300-residue chain is Geranylgeranyl diphosphate synthase (300 aa).

3 residues coordinate isopentenyl diphosphate: Lys50, Arg53, and His82. Mg(2+) contacts are provided by Asp89 and Asp95. Arg100 provides a ligand contact to (2E,6E)-farnesyl diphosphate. Arg101 is an isopentenyl diphosphate binding site. The (2E,6E)-farnesyl diphosphate site is built by Lys186, Thr187, and Gln224.

The protein belongs to the FPP/GGPP synthase family. Mg(2+) is required as a cofactor.

It localises to the plastid. The protein resides in the cyanelle. The enzyme catalyses isopentenyl diphosphate + (2E,6E)-farnesyl diphosphate = (2E,6E,10E)-geranylgeranyl diphosphate + diphosphate. The protein operates within isoprenoid biosynthesis; geranylgeranyl diphosphate biosynthesis; geranylgeranyl diphosphate from farnesyl diphosphate and isopentenyl diphosphate: step 1/1. In terms of biological role, catalyzes the condensation of farnesyl diphosphate (FPP) and isopentenyl diphosphate (IPP) to yield geranylgeranyl diphosphate (GGPP) needed for biosynthesis of carotenoids and diterpenes. This Cyanophora paradoxa protein is Geranylgeranyl diphosphate synthase (crtE).